Here is an 89-residue protein sequence, read N- to C-terminus: Elongation factor 1-beta (89 aa).

It belongs to the EF-1-beta/EF-1-delta family.

Its function is as follows. Promotes the exchange of GDP for GTP in EF-1-alpha/GDP, thus allowing the regeneration of EF-1-alpha/GTP that could then be used to form the ternary complex EF-1-alpha/GTP/AAtRNA. This is Elongation factor 1-beta from Methanosarcina mazei (strain ATCC BAA-159 / DSM 3647 / Goe1 / Go1 / JCM 11833 / OCM 88) (Methanosarcina frisia).